The chain runs to 726 residues: Probable cadmium-transporting ATPase (726 aa).

The 64-residue stretch at 11–74 (DKQVYRVEGF…AGAFENLKVF (64 aa)) folds into the HMA domain. Cd(2+) contacts are provided by Cys-22 and Cys-25. The next 5 membrane-spanning stretches (helical) occupy residues 105–125 (STLL…FVNG), 129–149 (LVTS…LFKV), 163–179 (TLMT…GEWA), 335–355 (IIMV…GGSW), and 363–383 (LAVL…ISIV). The active-site 4-aspartylphosphate intermediate is Asp-414. The next 2 membrane-spanning stretches (helical) occupy residues 671 to 693 (LNII…LLVI) and 698 to 720 (TLWI…SLRL).

The protein belongs to the cation transport ATPase (P-type) (TC 3.A.3) family. Type IB subfamily.

The protein resides in the cell membrane. It catalyses the reaction Cd(2+)(in) + ATP + H2O = Cd(2+)(out) + ADP + phosphate + H(+). In terms of biological role, couples the hydrolysis of ATP with the export of cadmium. This chain is Probable cadmium-transporting ATPase (cadA), found in Staphylococcus aureus (strain MRSA252).